We begin with the raw amino-acid sequence, 565 residues long: Arginine--tRNA ligase (565 aa).

The 'HIGH' region signature appears at 128 to 138 (ANPTGPLHVGH).

It belongs to the class-I aminoacyl-tRNA synthetase family. As to quaternary structure, monomer.

Its subcellular location is the cytoplasm. It catalyses the reaction tRNA(Arg) + L-arginine + ATP = L-arginyl-tRNA(Arg) + AMP + diphosphate. This Albidiferax ferrireducens (strain ATCC BAA-621 / DSM 15236 / T118) (Rhodoferax ferrireducens) protein is Arginine--tRNA ligase.